A 242-amino-acid polypeptide reads, in one-letter code: Biosynthetic peptidoglycan transglycosylase (242 aa).

Residues 19–39 traverse the membrane as a helical segment; sequence LLLACAVLWGGGVALFSIVPV.

This sequence belongs to the glycosyltransferase 51 family.

It localises to the cell inner membrane. It carries out the reaction [GlcNAc-(1-&gt;4)-Mur2Ac(oyl-L-Ala-gamma-D-Glu-L-Lys-D-Ala-D-Ala)](n)-di-trans,octa-cis-undecaprenyl diphosphate + beta-D-GlcNAc-(1-&gt;4)-Mur2Ac(oyl-L-Ala-gamma-D-Glu-L-Lys-D-Ala-D-Ala)-di-trans,octa-cis-undecaprenyl diphosphate = [GlcNAc-(1-&gt;4)-Mur2Ac(oyl-L-Ala-gamma-D-Glu-L-Lys-D-Ala-D-Ala)](n+1)-di-trans,octa-cis-undecaprenyl diphosphate + di-trans,octa-cis-undecaprenyl diphosphate + H(+). It participates in cell wall biogenesis; peptidoglycan biosynthesis. Its function is as follows. Peptidoglycan polymerase that catalyzes glycan chain elongation from lipid-linked precursors. This is Biosynthetic peptidoglycan transglycosylase from Klebsiella oxytoca.